The primary structure comprises 176 residues: ATP synthase subunit delta (176 aa).

It belongs to the ATPase delta chain family. In terms of assembly, F-type ATPases have 2 components, F(1) - the catalytic core - and F(0) - the membrane proton channel. F(1) has five subunits: alpha(3), beta(3), gamma(1), delta(1), epsilon(1). F(0) has three main subunits: a(1), b(2) and c(10-14). The alpha and beta chains form an alternating ring which encloses part of the gamma chain. F(1) is attached to F(0) by a central stalk formed by the gamma and epsilon chains, while a peripheral stalk is formed by the delta and b chains.

The protein resides in the cell inner membrane. In terms of biological role, f(1)F(0) ATP synthase produces ATP from ADP in the presence of a proton or sodium gradient. F-type ATPases consist of two structural domains, F(1) containing the extramembraneous catalytic core and F(0) containing the membrane proton channel, linked together by a central stalk and a peripheral stalk. During catalysis, ATP synthesis in the catalytic domain of F(1) is coupled via a rotary mechanism of the central stalk subunits to proton translocation. Functionally, this protein is part of the stalk that links CF(0) to CF(1). It either transmits conformational changes from CF(0) to CF(1) or is implicated in proton conduction. The sequence is that of ATP synthase subunit delta from Campylobacter concisus (strain 13826).